The sequence spans 470 residues: FLYWCH transcription factor 2 (470 aa).

The disordered stretch occupies residues 102 to 148 (SQLISEDTRPSASSSPSSTATAVSNSGQSNATSTSSSSTEPEYKPRN). A compositionally biased stretch (low complexity) spans 111–140 (PSASSSPSSTATAVSNSGQSNATSTSSSST). An FLYWCH-type zinc finger spans residues 145-204 (KPRNVREKVYADGYIMSFDKKSCCGTKEFWRCERKNDCNARMHSDINTREIVRKLHPHNH).

Functionally, probable transcription factor. May bind to the promoters of target genes, including micro-RNA genes, in order to repress expression, and acting redundantly with flh-1 and flh-3. This Caenorhabditis elegans protein is FLYWCH transcription factor 2.